A 766-amino-acid polypeptide reads, in one-letter code: 1,4-alpha-glucan branching enzyme GlgB (766 aa).

The active-site Nucleophile is the Asp431. Residue Glu484 is the Proton donor of the active site.

The protein belongs to the glycosyl hydrolase 13 family. GlgB subfamily. As to quaternary structure, monomer.

The catalysed reaction is Transfers a segment of a (1-&gt;4)-alpha-D-glucan chain to a primary hydroxy group in a similar glucan chain.. The protein operates within glycan biosynthesis; glycogen biosynthesis. Catalyzes the formation of the alpha-1,6-glucosidic linkages in glycogen by scission of a 1,4-alpha-linked oligosaccharide from growing alpha-1,4-glucan chains and the subsequent attachment of the oligosaccharide to the alpha-1,6 position. This Thermosynechococcus vestitus (strain NIES-2133 / IAM M-273 / BP-1) protein is 1,4-alpha-glucan branching enzyme GlgB.